The primary structure comprises 166 residues: Transmembrane protein 278 (166 aa).

Acidic residues predominate over residues 1 to 15; that stretch reads MSDQERETEEDEGGD. Positions 1–28 are disordered; that stretch reads MSDQERETEEDEGGDPSDTAPMLPQRLP. 3 helical membrane-spanning segments follow: residues 39 to 59, 65 to 85, and 111 to 131; these read GWAS…WALA, LLLP…VVYL, and AAVI…ASAA.

The protein belongs to the TMEM88 family.

It is found in the membrane. The polypeptide is Transmembrane protein 278 (TMEM278) (Bos taurus (Bovine)).